Reading from the N-terminus, the 226-residue chain is Sugar fermentation stimulation protein homolog (226 aa).

This sequence belongs to the SfsA family.

The chain is Sugar fermentation stimulation protein homolog from Ruminiclostridium cellulolyticum (strain ATCC 35319 / DSM 5812 / JCM 6584 / H10) (Clostridium cellulolyticum).